A 161-amino-acid polypeptide reads, in one-letter code: Small ribosomal subunit protein uS9 (161 aa).

The protein belongs to the universal ribosomal protein uS9 family.

This Bartonella bacilliformis (strain ATCC 35685 / KC583 / Herrer 020/F12,63) protein is Small ribosomal subunit protein uS9.